The chain runs to 127 residues: Aspartate 1-decarboxylase (127 aa).

The active-site Schiff-base intermediate with substrate; via pyruvic acid is the serine 25. Serine 25 carries the pyruvic acid (Ser) modification. Substrate is bound at residue threonine 57. The active-site Proton donor is the tyrosine 58. Substrate is bound at residue 73–75 (GAA).

The protein belongs to the PanD family. As to quaternary structure, heterooctamer of four alpha and four beta subunits. Pyruvate serves as cofactor. Is synthesized initially as an inactive proenzyme, which is activated by self-cleavage at a specific serine bond to produce a beta-subunit with a hydroxyl group at its C-terminus and an alpha-subunit with a pyruvoyl group at its N-terminus.

The protein localises to the cytoplasm. The enzyme catalyses L-aspartate + H(+) = beta-alanine + CO2. It functions in the pathway cofactor biosynthesis; (R)-pantothenate biosynthesis; beta-alanine from L-aspartate: step 1/1. Catalyzes the pyruvoyl-dependent decarboxylation of aspartate to produce beta-alanine. The sequence is that of Aspartate 1-decarboxylase from Neisseria meningitidis serogroup C / serotype 2a (strain ATCC 700532 / DSM 15464 / FAM18).